The primary structure comprises 669 residues: Glutaminase kidney isoform, mitochondrial (669 aa).

The N-terminal 54 residues, 1-54 (MMRLRGSGMLRDLLLRSPAGVSATLRRAQPLVTLCRRPRGGGRPAAGPAAAARL), are a transit peptide targeting the mitochondrion. A disordered region spans residues 68 to 118 (LARGLSSSPSEILQELGKGSTHPQPGVSPPAAPAAPGPKDGPGETDAFGNS). Residues 93 to 103 (GVSPPAAPAAP) show a composition bias toward pro residues. 2 positions are modified to N6-succinyllysine: Lys-130 and Lys-164. Position 286 (Ser-286) interacts with substrate. At Lys-311 the chain carries N6-acetyllysine. The interval 315 to 322 (GLRFNKLF) is highly mobile activation loop. Substrate is bound by residues Asn-335, Glu-381, Asn-388, Tyr-414, Tyr-466, and Val-484. ANK repeat units lie at residues 585–614 (DSRT…VNPF) and 619–648 (WNNT…QYTP). Residues 647–669 (TPQGDSDNGKENQTVHKNLDGLL) form a disordered region. Phosphoserine is present on Ser-652. Over residues 653–669 (DNGKENQTVHKNLDGLL) the composition is skewed to basic and acidic residues.

Belongs to the glutaminase family. Homotetramer, dimer of dimers. The tetramers can assemble into rod-like oligomers (in vitro), but the physiological significance of this is not clear. Interacts with RAF1 and MAP2K2. Interacts with ATCAY; the interaction is direct and may control GLS localization, negatively regulating its activity. In terms of processing, synthesized as a 74-kDa cytosolic precursor which is proteolytically processed by the mitochondrial-processing peptidase (MPP) via a 72-kDa intermediate to yield the mature mitochondrial 68- and 65-kDa subunits. In terms of tissue distribution, isoform 1 and isoform 3 are detected in brain cortex. Isoform 3 is highly expressed in astrocytoma, ganglioglioma and ependymoma. Isoform 1 is highly expressed in brain and kidney, but not detected in liver. Isoform 3 is highly expressed in heart and pancreas, detected at lower levels in placenta, lung, pancreas and kidney, but is not detected in liver. Isoform 2 is expressed in cardiac and skeletal muscle.

The protein localises to the mitochondrion. Its subcellular location is the cytoplasm. It localises to the cytosol. It is found in the mitochondrion matrix. It carries out the reaction L-glutamine + H2O = L-glutamate + NH4(+). Isoform 1 and isoform 3 are activated by phosphate. Inhibited by BPTES. BPTES binds between subunits and favors dissociation of the tetramer into dimers. Inhibited by 6-diazo-5-oxo-L-norleucine (DON). Enzyme activity is stimulated by phosphorylation. Functionally, catalyzes the first reaction in the primary pathway for the renal catabolism of glutamine. Plays a role in maintaining acid-base homeostasis. Regulates the levels of the neurotransmitter glutamate, the main excitatory neurotransmitter in the brain. In terms of biological role, lacks catalytic activity. This chain is Glutaminase kidney isoform, mitochondrial (GLS), found in Homo sapiens (Human).